We begin with the raw amino-acid sequence, 543 residues long: Excitatory amino acid transporter 1 (543 aa).

The Cytoplasmic portion of the chain corresponds to 1–47; sequence MTKSNGEEPRMGGRMERLQQGVRKRTLLAKKKVQSLTKEDVKSYLFR. The chain crosses the membrane as a helical span at residues 48–68; sequence NAFVLLTVTAVIVGTILGFAL. The Extracellular portion of the chain corresponds to 69–86; it reads RPYKMSYREVKYFSFPGE. Residues 87–108 form a helical membrane-spanning segment; sequence LLMRMLQMLVLPLIISSLVTGM. Over 109–122 the chain is Cytoplasmic; that stretch reads AALDSKASGKMGMR. The helical transmembrane segment at 123-145 threads the bilayer; the sequence is AVVYYMTTTIIAVVIGIIIVIII. Over 146-236 the chain is Extracellular; sequence HPGKGTKENM…IREEMVPVPG (91 aa). N-linked (GlcNAc...) asparagine glycans are attached at residues Asn-206 and Asn-216. The helical transmembrane segment at 237–260 threads the bilayer; the sequence is SVNGVNALGLVVFSMCFGFVIGNM. Over 261 to 269 the chain is Cytoplasmic; it reads KEQGQALRE. Residues 270-297 traverse the membrane as a helical segment; that stretch reads FFDSLNEAIMRLVAVIMWYAPLGILFLI. The Extracellular segment spans residues 298-318; sequence AGKIVEMEDMGVIGGQLAMYT. A helical membrane pass occupies residues 319 to 340; the sequence is VTVIVGLLIHAVIVLPLLYFLV. The Cytoplasmic segment spans residues 341-345; it reads TRKNP. Residues 346–376 constitute an intramembrane region (discontinuously helical); the sequence is WVFIGGLLQALITALGTSSSSATLPITFKCL. Residue 363–365 coordinates L-aspartate; sequence SSS. Over 377–385 the chain is Cytoplasmic; sequence EENNGVDKR. A helical transmembrane segment spans residues 386-412; that stretch reads ITRFVLPVGATINMDGTALYEALAAIF. Na(+)-binding residues include Gly-394, Thr-396, and Asn-398. L-aspartate is bound at residue Thr-402. Topologically, residues 413–425 are extracellular; it reads IAQVNNFDLNFGQ. The segment at residues 426–459 is an intramembrane region (discontinuously helical); that stretch reads IITISITATAASIGAAGIPQAGLVTMVIVLTSVG. 443-447 lines the L-aspartate pocket; it reads IPQAG. Topologically, residues 460-472 are extracellular; the sequence is LPTDDITLIIAVD. Residues 473 to 494 traverse the membrane as a helical segment; that stretch reads WFLDRLRTTTNVLGDSLGAGIV. The L-aspartate site is built by Asp-476 and Asn-483. Na(+) contacts are provided by Asn-483 and Asp-487. The Cytoplasmic portion of the chain corresponds to 495 to 543; that stretch reads EHLSRHELKNRDVEMGNSVIEENEMKKPYQLIAQDNEPEKPVADSETKM. Ser-512 carries the post-translational modification Phosphoserine. The segment at 522 to 543 is disordered; the sequence is PYQLIAQDNEPEKPVADSETKM. The span at 531–543 shows a compositional bias: basic and acidic residues; that stretch reads EPEKPVADSETKM.

Belongs to the dicarboxylate/amino acid:cation symporter (DAACS) (TC 2.A.23) family. SLC1A3 subfamily. Homotrimer. Glycosylated. In terms of tissue distribution, detected in brain, in Bergmann glia arborising into the molecular layer of the cerebellum (at protein level). Localized in brain and is highly enriched in the Purkinje cell layer in cerebellum. Intermediate level in lung, low level in spleen, skeletal muscle and testis.

It is found in the cell membrane. The catalysed reaction is K(+)(in) + L-glutamate(out) + 3 Na(+)(out) + H(+)(out) = K(+)(out) + L-glutamate(in) + 3 Na(+)(in) + H(+)(in). It catalyses the reaction K(+)(in) + L-aspartate(out) + 3 Na(+)(out) + H(+)(out) = K(+)(out) + L-aspartate(in) + 3 Na(+)(in) + H(+)(in). The enzyme catalyses D-aspartate(out) + K(+)(in) + 3 Na(+)(out) + H(+)(out) = D-aspartate(in) + K(+)(out) + 3 Na(+)(in) + H(+)(in). Sodium-dependent, high-affinity amino acid transporter that mediates the uptake of L-glutamate and also L-aspartate and D-aspartate. Functions as a symporter that transports one amino acid molecule together with two or three Na(+) ions and one proton, in parallel with the counter-transport of one K(+) ion. Plays a redundant role in the rapid removal of released glutamate from the synaptic cleft, which is essential for terminating the postsynaptic action of glutamate. The sequence is that of Excitatory amino acid transporter 1 (Slc1a3) from Mus musculus (Mouse).